We begin with the raw amino-acid sequence, 91 residues long: Ribonuclease P protein component 4 (91 aa).

Residues C48, C51, C71, and C74 each coordinate Zn(2+).

This sequence belongs to the eukaryotic/archaeal RNase P protein component 4 family. In terms of assembly, consists of a catalytic RNA component and at least 4-5 protein subunits. Zn(2+) is required as a cofactor.

Its subcellular location is the cytoplasm. The enzyme catalyses Endonucleolytic cleavage of RNA, removing 5'-extranucleotides from tRNA precursor.. Functionally, part of ribonuclease P, a protein complex that generates mature tRNA molecules by cleaving their 5'-ends. The protein is Ribonuclease P protein component 4 of Picrophilus torridus (strain ATCC 700027 / DSM 9790 / JCM 10055 / NBRC 100828 / KAW 2/3).